The sequence spans 547 residues: Chaperonin GroEL (547 aa).

Residues 30–33 (TLGP), Lys51, 87–91 (DGTTT), Gly415, and Asp496 contribute to the ATP site.

It belongs to the chaperonin (HSP60) family. In terms of assembly, forms a cylinder of 14 subunits composed of two heptameric rings stacked back-to-back. Interacts with the co-chaperonin GroES.

Its subcellular location is the cytoplasm. The catalysed reaction is ATP + H2O + a folded polypeptide = ADP + phosphate + an unfolded polypeptide.. Functionally, together with its co-chaperonin GroES, plays an essential role in assisting protein folding. The GroEL-GroES system forms a nano-cage that allows encapsulation of the non-native substrate proteins and provides a physical environment optimized to promote and accelerate protein folding. In Haemophilus ducreyi (strain 35000HP / ATCC 700724), this protein is Chaperonin GroEL.